Consider the following 180-residue polypeptide: ATP-dependent protease subunit HslV (180 aa).

Thr-6 is a catalytic residue. Residues Ala-164, Cys-167, and Thr-170 each contribute to the Na(+) site.

The protein belongs to the peptidase T1B family. HslV subfamily. A double ring-shaped homohexamer of HslV is capped on each side by a ring-shaped HslU homohexamer. The assembly of the HslU/HslV complex is dependent on binding of ATP.

Its subcellular location is the cytoplasm. The catalysed reaction is ATP-dependent cleavage of peptide bonds with broad specificity.. Allosterically activated by HslU binding. Functionally, protease subunit of a proteasome-like degradation complex believed to be a general protein degrading machinery. This chain is ATP-dependent protease subunit HslV, found in Borrelia turicatae (strain 91E135).